The following is a 310-amino-acid chain: Homoserine kinase (310 aa).

An ATP-binding site is contributed by 91–101 (PIGSGLGSSAC).

Belongs to the GHMP kinase family. Homoserine kinase subfamily.

Its subcellular location is the cytoplasm. The catalysed reaction is L-homoserine + ATP = O-phospho-L-homoserine + ADP + H(+). It functions in the pathway amino-acid biosynthesis; L-threonine biosynthesis; L-threonine from L-aspartate: step 4/5. Catalyzes the ATP-dependent phosphorylation of L-homoserine to L-homoserine phosphate. In Escherichia coli O17:K52:H18 (strain UMN026 / ExPEC), this protein is Homoserine kinase.